A 912-amino-acid polypeptide reads, in one-letter code: DNA (cytosine-5)-methyltransferase 3A (912 aa).

Disordered stretches follow at residues 1 to 178 (MPAM…GWES) and 221 to 286 (IAGM…EYED). The span at 17 to 40 (AEREEDRKDGEEQEEPRGKEERQE) shows a compositional bias: basic and acidic residues. The span at 47–57 (KVGRPGRKRKH) shows a compositional bias: basic residues. Over residues 74–83 (KSPSMAQDSG) the composition is skewed to polar residues. S105 is subject to Phosphoserine. Over residues 113–128 (GAPAEGEGAAETLPEA) the composition is skewed to low complexity. T124 bears the Phosphothreonine mark. Residues 149 to 167 (AGKEQKETNIESMKMEGSR) show a composition bias toward basic and acidic residues. Residue K162 forms a Glycyl lysine isopeptide (Lys-Gly) (interchain with G-Cter in SUMO2) linkage. R171 carries the omega-N-methylarginine modification. Residues 199-403 (SKRKRDEWLA…DTAKAVEVQN (205 aa)) form an interaction with DNMT1 and DNMT3B region. 2 positions are modified to phosphoserine: S243 and S255. Over residues 246 to 260 (AVQQPTDPASPTVAT) the composition is skewed to polar residues. T261 carries the phosphothreonine modification. Residue S267 is modified to Phosphoserine. The segment covering 269–279 (AGDKNATKAGD) has biased composition (basic and acidic residues). The region spanning 292–350 (IGELVWGKLRGFSWWPGRIVSWWMTGRSRAAEGTRWVMWFGDGKFSVVCVEKLMPLSSF) is the PWWP domain. S390 and S393 each carry phosphoserine. The disordered stretch occupies residues 447 to 466 (AYAPPPPAKKPRKSTAEKPK). One can recognise an ADD domain in the interval 482–614 (EVRQKCRNIE…LQMFFANNHD (133 aa)). Residues 493-523 (ICISCGSLNVTLEHPLFVGGMCQNCKNCFLE) form a GATA-type; atypical zinc finger. Positions 494–586 (CISCGSLNVT…KEDPWNCYMC (93 aa)) are interaction with the PRC2/EED-EZH2 complex. The PHD-type; atypical zinc finger occupies 534–590 (QSYCTICCGGREVLMCGNNNCCRCFCVECVDLLVGPGAAQAAIKEDPWNCYMCGHKG). In terms of domain architecture, SAM-dependent MTase C5-type spans 634-912 (IRVLSLFDGI…APLKEYFACV (279 aa)). S-adenosyl-L-methionine is bound by residues 641-645 (DGIAT), E664, and 686-688 (DVR). The active site involves C710. C710 carries the S-methylcysteine; by autocatalysis modification. Position 891-893 (891-893 (RSW)) interacts with S-adenosyl-L-methionine.

This sequence belongs to the class I-like SAM-binding methyltransferase superfamily. C5-methyltransferase family. As to quaternary structure, heterotetramer composed of 1 DNMT3A homodimer and 2 DNMT3L subunits (DNMT3L-DNMT3A-DNMT3A-DNMT3L). Interacts with UBC9, PIAS1 and PIAS2. Binds the ZBTB18 transcriptional repressor. Interacts with SETDB1. Associates with HDAC1 through its ADD domain. Interacts with UHRF1. Interacts with DNMT1 and DNMT3B. Interacts with the PRC2/EED-EZH2 complex. Interacts with MPHOSPH8. Interacts with histone H3 that is not methylated at 'Lys-4' (H3K4). Interacts with SPOCD1. Interacts with ZNF263; recruited to the SIX3 promoter along with other proteins involved in chromatin modification and transcriptional corepression where it contributes to transcriptional repression. Post-translationally, sumoylated; sumoylation disrupts the ability to interact with histone deacetylases (HDAC1 and HDAC2) and repress transcription. Auto-methylated at Cys-710: auto-methylation takes place in absence of DNA substrate and inactivates the DNA methyltransferase activity. Inactivation by auto-methylation may be used to inactivate unused DNA methyltransferases in the cell. In terms of tissue distribution, highly expressed in fetal tissues, skeletal muscle, heart, peripheral blood mononuclear cells, kidney, and at lower levels in placenta, brain, liver, colon, spleen, small intestine and lung.

Its subcellular location is the nucleus. It is found in the chromosome. The protein resides in the cytoplasm. It carries out the reaction a 2'-deoxycytidine in DNA + S-adenosyl-L-methionine = a 5-methyl-2'-deoxycytidine in DNA + S-adenosyl-L-homocysteine + H(+). The enzyme catalyses L-cysteinyl-[protein] + S-adenosyl-L-methionine = S-methyl-L-cysteinyl-[protein] + S-adenosyl-L-homocysteine + H(+). With respect to regulation, activated by binding to the regulatory factor DNMT3L. Auto-methylation at Cys-710 in absence of DNA inactivates the DNA methyltransferase activity. In terms of biological role, required for genome-wide de novo methylation and is essential for the establishment of DNA methylation patterns during development. DNA methylation is coordinated with methylation of histones. It modifies DNA in a non-processive manner and also methylates non-CpG sites. May preferentially methylate DNA linker between 2 nucleosomal cores and is inhibited by histone H1. Plays a role in paternal and maternal imprinting. Required for methylation of most imprinted loci in germ cells. Acts as a transcriptional corepressor for ZBTB18. Recruited to trimethylated 'Lys-36' of histone H3 (H3K36me3) sites. Can actively repress transcription through the recruitment of HDAC activity. Also has weak auto-methylation activity on Cys-710 in absence of DNA. The protein is DNA (cytosine-5)-methyltransferase 3A (DNMT3A) of Homo sapiens (Human).